A 430-amino-acid polypeptide reads, in one-letter code: Cysteate synthase (430 aa).

Lys106 carries the N6-(pyridoxal phosphate)lysine modification. Pyridoxal 5'-phosphate-binding residues include Asn132 and Thr381.

The protein belongs to the threonine synthase family. Cysteate synthase subfamily. In terms of assembly, homotrimer. It depends on pyridoxal 5'-phosphate as a cofactor.

It catalyses the reaction O-phospho-L-serine + sulfite + H(+) = L-cysteate + phosphate. Its pathway is cofactor biosynthesis; coenzyme M biosynthesis. Specifically catalyzes the beta-elimination of phosphate from L-phosphoserine and the beta-addition of sulfite to the dehydroalanine intermediate to produce L-cysteate. In Methanoculleus marisnigri (strain ATCC 35101 / DSM 1498 / JR1), this protein is Cysteate synthase.